Reading from the N-terminus, the 156-residue chain is Small ribosomal subunit protein uS7 (156 aa).

Belongs to the universal ribosomal protein uS7 family. In terms of assembly, part of the 30S ribosomal subunit. Contacts proteins S9 and S11.

One of the primary rRNA binding proteins, it binds directly to 16S rRNA where it nucleates assembly of the head domain of the 30S subunit. Is located at the subunit interface close to the decoding center, probably blocks exit of the E-site tRNA. This Bacillus cereus (strain B4264) protein is Small ribosomal subunit protein uS7.